Reading from the N-terminus, the 376-residue chain is MSRHKVYKAISSYVIIAIIIIAIVAVVGVLLLTRHPSSSSVTSTTTPTTSSSVSPSSSGPVIVYVAGAYKAIFDYLAKQFEQQTGITVDVVPGGSFGLAAQIAKGQPVSVFVPVAYIQAVELEGNRDPGWAIAFISDQMAIIYSNYTTQSPYWNQLYSNYTMAMKTNESQYWYNFFYLLTTKFSLGISNPSSDPEGLYAYLILKMAGYLYANHSFDYFINLVNHNPNVVSAPTTADFVPDLATGKLDFTFSYVSYAISQHLEYLKLPPWLSFGYYPNETSWDSFFFYKITVNGQTLKIYGNPVYLYITIPVNASNEQGAIEFVEFIVDHVQELSMFGVTPITHPLLFYQNKSDVPSQILNLLNQGVLQYGGNFSAV.

A signal peptide spans 1–31 (MSRHKVYKAISSYVIIAIIIIAIVAVVGVLL). Positions 37 to 57 (SSSSVTSTTTPTTSSSVSPSS) are disordered.

It belongs to the bacterial solute-binding protein 1 family. WtpA subfamily.

This is an uncharacterized protein from Sulfurisphaera tokodaii (strain DSM 16993 / JCM 10545 / NBRC 100140 / 7) (Sulfolobus tokodaii).